The following is a 619-amino-acid chain: MDWEKVGLKMGLEIHQQLDTESKLFCPCRTELTDSEPDHDIVRNLRPTQSELGKFDRAAFEEAMRKLHFHYENYHEETCLVEADEEPPHPLNPEALEIAVTIALLLNMRVVDEFHTMRKQVIDGSNTGGFQRTGLVATDGHLETPQGTVKIENLCLEEDAARRIRETGDGVVFRLDRLGIPLVEITTDPSMSDPQQLREVAYQIGQILRSTRVKRGLGTIRQDLNISIRDGARVEVKGVQDLDLIPEIVEREVKRQLSLVEIRDTLQERGAVVEDKIFDVSEVFADTESRIISSAESVLAVKLRGFDGLIGVEIQPGRRLGTEMADYAKKRGVSGIFHTDELPAYGITEEEVRGLRDAVGASQGDAVVMVAHERVTAENALREVIRRAEMAIQGVPEETRKALPDGNTQYLRPLPTSSRMYLETDIPLFRIEDDLLEGIRRNLPELPSEKKERIMRDYGLSEDLASQLVKRNLVDEFEALTEFRVDTTVIASLLAYTLRELRREGHDVDGLGLDELRDAIKLLEVGKISKDALRDIVACMADEGLAAEDAARKLNLLLLAEDEIESIIQEIVEGNLDMISERGMGAMGPLMGQAMGRLRGRADGKVVNRILREKIQERL.

The protein belongs to the GatB/GatE family. GatE subfamily. Heterodimer of GatD and GatE.

It carries out the reaction L-glutamyl-tRNA(Gln) + L-glutamine + ATP + H2O = L-glutaminyl-tRNA(Gln) + L-glutamate + ADP + phosphate + H(+). Allows the formation of correctly charged Gln-tRNA(Gln) through the transamidation of misacylated Glu-tRNA(Gln) in organisms which lack glutaminyl-tRNA synthetase. The reaction takes place in the presence of glutamine and ATP through an activated gamma-phospho-Glu-tRNA(Gln). The GatDE system is specific for glutamate and does not act on aspartate. This chain is Glutamyl-tRNA(Gln) amidotransferase subunit E (gatE), found in Methanothermobacter thermautotrophicus (strain ATCC 29096 / DSM 1053 / JCM 10044 / NBRC 100330 / Delta H) (Methanobacterium thermoautotrophicum).